The primary structure comprises 254 residues: Triosephosphate isomerase (254 aa).

A substrate-binding site is contributed by 12-14 (NWK). The active-site Electrophile is the His99. Catalysis depends on Glu169, which acts as the Proton acceptor. Substrate contacts are provided by residues Gly175, Ser214, and 235–236 (GG).

This sequence belongs to the triosephosphate isomerase family. Homodimer.

It localises to the cytoplasm. It carries out the reaction D-glyceraldehyde 3-phosphate = dihydroxyacetone phosphate. The protein operates within carbohydrate biosynthesis; gluconeogenesis. It functions in the pathway carbohydrate degradation; glycolysis; D-glyceraldehyde 3-phosphate from glycerone phosphate: step 1/1. Involved in the gluconeogenesis. Catalyzes stereospecifically the conversion of dihydroxyacetone phosphate (DHAP) to D-glyceraldehyde-3-phosphate (G3P). This is Triosephosphate isomerase from Brucella abortus biovar 1 (strain 9-941).